The primary structure comprises 357 residues: Phenylalanine--tRNA ligase alpha subunit (357 aa).

Residue Glu-257 coordinates Mg(2+).

Belongs to the class-II aminoacyl-tRNA synthetase family. Phe-tRNA synthetase alpha subunit type 1 subfamily. As to quaternary structure, tetramer of two alpha and two beta subunits. The cofactor is Mg(2+).

Its subcellular location is the cytoplasm. It catalyses the reaction tRNA(Phe) + L-phenylalanine + ATP = L-phenylalanyl-tRNA(Phe) + AMP + diphosphate + H(+). This is Phenylalanine--tRNA ligase alpha subunit from Roseobacter denitrificans (strain ATCC 33942 / OCh 114) (Erythrobacter sp. (strain OCh 114)).